A 349-amino-acid polypeptide reads, in one-letter code: Protein-glutamate methylesterase/protein-glutamine glutaminase (349 aa).

In terms of domain architecture, Response regulatory spans 5-122 (RVLCVDDSAL…REGMLAYSEL (118 aa)). 4-aspartylphosphate is present on D56. The CheB-type methylesterase domain occupies 152-344 (LLSSEKLIAI…QRMLAQISSG (193 aa)). Residues S164, H190, and D286 contribute to the active site.

It belongs to the CheB family. Post-translationally, phosphorylated by CheA. Phosphorylation of the N-terminal regulatory domain activates the methylesterase activity.

Its subcellular location is the cytoplasm. It carries out the reaction [protein]-L-glutamate 5-O-methyl ester + H2O = L-glutamyl-[protein] + methanol + H(+). It catalyses the reaction L-glutaminyl-[protein] + H2O = L-glutamyl-[protein] + NH4(+). Its function is as follows. Involved in chemotaxis. Part of a chemotaxis signal transduction system that modulates chemotaxis in response to various stimuli. Catalyzes the demethylation of specific methylglutamate residues introduced into the chemoreceptors (methyl-accepting chemotaxis proteins or MCP) by CheR. Also mediates the irreversible deamidation of specific glutamine residues to glutamic acid. The sequence is that of Protein-glutamate methylesterase/protein-glutamine glutaminase from Yersinia pseudotuberculosis serotype I (strain IP32953).